A 273-amino-acid chain; its full sequence is HTH-type transcriptional regulator NimR (273 aa).

The HTH araC/xylS-type domain occupies 158 to 258 (PKIRTMVEMM…GQTPGRYIAR (101 aa)). 2 consecutive DNA-binding regions (H-T-H motif) follow at residues 178-199 (GQWA…VKET) and 225-248 (VQKV…KKGL).

In terms of biological role, negatively regulates expression of the nimT operon and its own expression. Acts by binding to the nimR-nimT intergenic region. The chain is HTH-type transcriptional regulator NimR from Escherichia coli (strain K12).